Here is a 211-residue protein sequence, read N- to C-terminus: Thymidylate kinase (211 aa).

Gly11–Thr18 is a binding site for ATP.

It belongs to the thymidylate kinase family.

It carries out the reaction dTMP + ATP = dTDP + ADP. Its function is as follows. Phosphorylation of dTMP to form dTDP in both de novo and salvage pathways of dTTP synthesis. This Streptococcus pyogenes serotype M6 (strain ATCC BAA-946 / MGAS10394) protein is Thymidylate kinase.